A 55-amino-acid polypeptide reads, in one-letter code: Large ribosomal subunit protein bL33 (55 aa).

Belongs to the bacterial ribosomal protein bL33 family.

The sequence is that of Large ribosomal subunit protein bL33 from Methylocella silvestris (strain DSM 15510 / CIP 108128 / LMG 27833 / NCIMB 13906 / BL2).